We begin with the raw amino-acid sequence, 228 residues long: MAVTFSDLHTERGLKTLEEHLAGKTYISGDQLSVDDVKVYAAVLENPGDGFPNASKWYDSVASHLAKSFPGKADGVRVGGGVAPPSEAHPHTEEPAADGDGDDDDDIDLFADETEDEKKAAEEREAAKKDTKKTKESGKSSVLLEVKPWDDETDMKKLEEAVRSVQMPGLTWGASKLVPVGYGIKKLTIMMTIVDDLVSVDNLIEDHLTSEPNNEYIQSVDIVAFNKI.

The residue at position 2 (Ala-2) is an N-acetylalanine. The GST C-terminal domain maps to 14–65 (LKTLEEHLAGKTYISGDQLSVDDVKVYAAVLENPGDGFPNASKWYDSVASHL). A disordered region spans residues 75–139 (GVRVGGGVAP…DTKKTKESGK (65 aa)). Over residues 95 to 115 (PAADGDGDDDDDIDLFADETE) the composition is skewed to acidic residues. The segment covering 116-138 (DEKKAAEEREAAKKDTKKTKESG) has biased composition (basic and acidic residues).

This sequence belongs to the EF-1-beta/EF-1-delta family. EF-1 is composed of 4 subunits: alpha, beta (1B-alpha=beta'), delta (1B-beta), and gamma (1B-gamma).

It is found in the cell membrane. Its function is as follows. EF-1-beta and EF-1-delta stimulate the exchange of GDP bound to EF-1-alpha to GTP. The sequence is that of Elongation factor 1-beta 1 from Arabidopsis thaliana (Mouse-ear cress).